The following is a 393-amino-acid chain: Formate-dependent phosphoribosylglycinamide formyltransferase (393 aa).

N(1)-(5-phospho-beta-D-ribosyl)glycinamide is bound by residues 22–23 and Glu-82; that span reads EL. ATP-binding positions include Arg-114, Lys-155, 160–165, 195–198, and Glu-203; these read SSGKGQ and EGFV. The ATP-grasp domain maps to 119 to 308; that stretch reads RLAAEELGLP…EFALHARAIL (190 aa). Mg(2+) contacts are provided by Glu-267 and Glu-279. Residues Asp-286, Lys-356, and 363–364 each bind N(1)-(5-phospho-beta-D-ribosyl)glycinamide; that span reads RR.

The protein belongs to the PurK/PurT family. In terms of assembly, homodimer.

The catalysed reaction is N(1)-(5-phospho-beta-D-ribosyl)glycinamide + formate + ATP = N(2)-formyl-N(1)-(5-phospho-beta-D-ribosyl)glycinamide + ADP + phosphate + H(+). Its pathway is purine metabolism; IMP biosynthesis via de novo pathway; N(2)-formyl-N(1)-(5-phospho-D-ribosyl)glycinamide from N(1)-(5-phospho-D-ribosyl)glycinamide (formate route): step 1/1. Involved in the de novo purine biosynthesis. Catalyzes the transfer of formate to 5-phospho-ribosyl-glycinamide (GAR), producing 5-phospho-ribosyl-N-formylglycinamide (FGAR). Formate is provided by PurU via hydrolysis of 10-formyl-tetrahydrofolate. The polypeptide is Formate-dependent phosphoribosylglycinamide formyltransferase (Nitratidesulfovibrio vulgaris (strain DSM 19637 / Miyazaki F) (Desulfovibrio vulgaris)).